A 235-amino-acid chain; its full sequence is Sugar fermentation stimulation protein homolog (235 aa).

It belongs to the SfsA family.

The polypeptide is Sugar fermentation stimulation protein homolog (Roseobacter denitrificans (strain ATCC 33942 / OCh 114) (Erythrobacter sp. (strain OCh 114))).